Reading from the N-terminus, the 151-residue chain is Ribosome maturation factor RimP (151 aa).

This sequence belongs to the RimP family.

The protein resides in the cytoplasm. Required for maturation of 30S ribosomal subunits. The chain is Ribosome maturation factor RimP from Endomicrobium trichonymphae.